Reading from the N-terminus, the 366-residue chain is tRNA-specific 2-thiouridylase MnmA (366 aa).

ATP is bound by residues 6-13 (AMSGGVDS) and Leu32. Catalysis depends on Cys101, which acts as the Nucleophile. Cysteines 101 and 197 form a disulfide. Gly125 lines the ATP pocket. The tract at residues 147–149 (KDQ) is interaction with tRNA. The active-site Cysteine persulfide intermediate is the Cys197.

Belongs to the MnmA/TRMU family.

It localises to the cytoplasm. It carries out the reaction S-sulfanyl-L-cysteinyl-[protein] + uridine(34) in tRNA + AH2 + ATP = 2-thiouridine(34) in tRNA + L-cysteinyl-[protein] + A + AMP + diphosphate + H(+). Functionally, catalyzes the 2-thiolation of uridine at the wobble position (U34) of tRNA, leading to the formation of s(2)U34. This chain is tRNA-specific 2-thiouridylase MnmA, found in Cutibacterium acnes (strain DSM 16379 / KPA171202) (Propionibacterium acnes).